The sequence spans 101 residues: Ribonuclease kappa-A (101 aa).

2 helical membrane-spanning segments follow: residues 13–33 (ACGI…GVFF) and 68–88 (VSYN…FSFC).

This sequence belongs to the RNase K family.

The protein resides in the membrane. In terms of biological role, endoribonuclease which preferentially cleaves ApU and ApG phosphodiester bonds. This chain is Ribonuclease kappa-A (rnasek-a), found in Xenopus laevis (African clawed frog).